The following is a 148-amino-acid chain: Large ribosomal subunit protein bL9 (148 aa).

The protein belongs to the bacterial ribosomal protein bL9 family.

Functionally, binds to the 23S rRNA. The protein is Large ribosomal subunit protein bL9 of Macrococcus caseolyticus (strain JCSC5402) (Macrococcoides caseolyticum).